Consider the following 137-residue polypeptide: Proofreading thioesterase EntH (137 aa).

Catalysis depends on Glu63, which acts as the Nucleophile or proton acceptor.

Belongs to the thioesterase PaaI family. Homotetramer. Dimer of dimers. Interacts specifically with the aryl carrier protein (ArCP) domain of EntB.

The protein resides in the cytoplasm. Its pathway is siderophore biosynthesis; enterobactin biosynthesis. Required for optimal enterobactin synthesis. Acts as a proofreading enzyme that prevents EntB misacylation by hydrolyzing the thioester bound existing between EntB and wrongly charged molecules. This chain is Proofreading thioesterase EntH, found in Cronobacter turicensis (strain DSM 18703 / CCUG 55852 / LMG 23827 / z3032).